A 211-amino-acid polypeptide reads, in one-letter code: Arginine exporter protein ArgO (211 aa).

The next 6 membrane-spanning stretches (helical) occupy residues 1-21, 37-57, 68-88, 111-131, 147-167, and 179-199; these read MISY…PLGP, LMIA…GIFG, LLAL…FGAL, IIAT…DTFV, WFAL…ALLA, and AQRI…FQLA.

Belongs to the LysE/ArgO transporter (TC 2.A.75) family.

Its subcellular location is the cell inner membrane. It catalyses the reaction L-arginine(in) = L-arginine(out). Involved in the export of arginine. Important to control the intracellular level of arginine and the correct balance between arginine and lysine. The chain is Arginine exporter protein ArgO from Salmonella paratyphi B (strain ATCC BAA-1250 / SPB7).